The sequence spans 583 residues: Eukaryotic translation initiation factor 3 subunit D (583 aa).

Residues 116–150 (GRAQRGAGQRGGRAGFQRVGAGRGQGDRFYDNRGG) form a disordered region. Positions 140 to 149 (QGDRFYDNRG) are enriched in basic and acidic residues. The RNA gate stretch occupies residues 298–312 (SLDLVTVNENAIDAP). Positions 561–583 (NTFEEDEEAAAEEEEQKAEEDEE) are disordered. A compositionally biased stretch (acidic residues) spans 563 to 583 (FEEDEEAAAEEEEQKAEEDEE).

Belongs to the eIF-3 subunit D family. As to quaternary structure, component of the eukaryotic translation initiation factor 3 (eIF-3) complex.

The protein resides in the cytoplasm. Its function is as follows. mRNA cap-binding component of the eukaryotic translation initiation factor 3 (eIF-3) complex, which is involved in protein synthesis of a specialized repertoire of mRNAs and, together with other initiation factors, stimulates binding of mRNA and methionyl-tRNAi to the 40S ribosome. The eIF-3 complex specifically targets and initiates translation of a subset of mRNAs involved in cell proliferation. In the eIF-3 complex, eif3d specifically recognizes and binds the 7-methylguanosine cap of a subset of mRNAs. This is Eukaryotic translation initiation factor 3 subunit D from Aspergillus oryzae (strain ATCC 42149 / RIB 40) (Yellow koji mold).